The following is a 238-amino-acid chain: Serine protease SplE (238 aa).

The signal sequence occupies residues Met-1–Ala-36. Active-site charge relay system residues include His-75, Asp-113, and Ser-191.

The protein belongs to the peptidase S1B family.

It is found in the secreted. The sequence is that of Serine protease SplE (splE) from Staphylococcus aureus.